We begin with the raw amino-acid sequence, 143 residues long: Transcriptional regulator MraZ (143 aa).

SpoVT-AbrB domains are found at residues 5–47 (TFTP…PREE) and 76–119 (ADEQ…DAQA).

This sequence belongs to the MraZ family. As to quaternary structure, forms oligomers.

It is found in the cytoplasm. The protein localises to the nucleoid. The sequence is that of Transcriptional regulator MraZ from Corynebacterium urealyticum (strain ATCC 43042 / DSM 7109).